Reading from the N-terminus, the 138-residue chain is Large ribosomal subunit protein uL16 (138 aa).

Residues 1 to 14 (MLQPKRTKYRRTHR) show a composition bias toward basic residues. A disordered region spans residues 1–24 (MLQPKRTKYRRTHRLQHDKGEAHT). The segment covering 15-24 (LQHDKGEAHT) has biased composition (basic and acidic residues).

It belongs to the universal ribosomal protein uL16 family. As to quaternary structure, part of the 50S ribosomal subunit.

Binds 23S rRNA and is also seen to make contacts with the A and possibly P site tRNAs. This chain is Large ribosomal subunit protein uL16, found in Mycoplasma mobile (strain ATCC 43663 / 163K / NCTC 11711) (Mesomycoplasma mobile).